The chain runs to 32 residues: MPRSLKKGPFIDLHLLKKVEKAVESGDKKPIR.

The protein belongs to the universal ribosomal protein uS19 family.

Protein S19 forms a complex with S13 that binds strongly to the 16S ribosomal RNA. This is Small ribosomal subunit protein uS19 (rpsS) from Yersinia enterocolitica.